The sequence spans 2392 residues: Protein Ycf2 (2392 aa).

Position 1658 to 1665 (1658 to 1665 (GPTEIGKS)) interacts with ATP.

This sequence belongs to the Ycf2 family.

It localises to the plastid. Its subcellular location is the chloroplast stroma. Probable ATPase of unknown function. Its presence in a non-photosynthetic plant (Epifagus virginiana) and experiments in tobacco indicate that it has an essential function which is probably not related to photosynthesis. The sequence is that of Protein Ycf2 from Anthoceros angustus (Hornwort).